Reading from the N-terminus, the 36-residue chain is Photosystem I reaction center subunit VIII (36 aa).

A helical membrane pass occupies residues 7 to 29 (PSIFVPLVGLVFPAITMASLFIY).

Belongs to the PsaI family.

The protein resides in the plastid. It is found in the chloroplast thylakoid membrane. Functionally, may help in the organization of the PsaL subunit. This chain is Photosystem I reaction center subunit VIII, found in Psilotum nudum (Whisk fern).